The following is a 2191-amino-acid chain: FRAS1-related extracellular matrix protein 1 (2191 aa).

A signal peptide spans 1 to 29 (MHSPGCTGPKAQWFLLLQLLLLHLDRVSA). The Cell attachment site signature appears at 205 to 207 (RGD). CSPG repeat units lie at residues 300–394 (VPRA…MELE), 419–506 (APRV…FRIF), and 527–621 (PPFL…FVLW). An N-linked (GlcNAc...) asparagine glycan is attached at Asn-341. N-linked (GlcNAc...) asparagine glycosylation is found at Asn-566 and Asn-628. 3 CSPG repeats span residues 648–779 (KEAP…VSVS), 801–892 (QVPE…LEVT), and 912–1007 (EPPI…LVVS). Asn-1039 carries an N-linked (GlcNAc...) asparagine glycan. CSPG repeat units lie at residues 1049-1151 (PPSI…VYAT), 1172-1273 (EAPD…IQLS), 1294-1391 (TPTL…FYLW), 1412-1504 (GDIV…FTIS), 1525-1614 (LPVL…FLAT), and 1650-1742 (HLHS…FQAM). A glycan (N-linked (GlcNAc...) asparagine) is linked at Asn-1180. A glycan (N-linked (GlcNAc...) asparagine) is linked at Asn-1584. The 100-residue stretch at 1749-1848 (ATPQSLDLRW…DDEVFEVILN (100 aa)) folds into the Calx-beta domain. The interval 1874 to 1921 (HPSNSFNQSKHSTWGKGPWHPLPSGSSSLTTSGSPLLERPPPSFTSGD) is disordered. A compositionally biased stretch (polar residues) spans 1875-1885 (PSNSFNQSKHS). The span at 1895–1910 (LPSGSSSLTTSGSPLL) shows a compositional bias: low complexity. Residues 2072 to 2186 (HSGYCHILVT…CSKGKAHNFV (115 aa)) enclose the C-type lectin domain. Cys-2163 and Cys-2177 form a disulfide bridge.

This sequence belongs to the FRAS1 family. Interacts with FREM2. As to expression, expressed in epidermis and hair follicles. Expressed in many developing epidermal appendages, including the whisker and sensory vibrissae, cranial and trunk hair follicles, meibomian glands, teeth, footpads, eyelash primordia and invaginating mammary glands. Limb expression localizes to sheets of dermal cells on the apical and basal surfaces of the digits but, unlike FRAS1, is excluded from the apical ectodermal ridge. Usually expressed at higher level in dermal cells underlying the differentiating epithelial components, especially underlying the epidermis of the head, limbs, and eyelids. Expression in the eyelid dermis is apparent as early as 13 dpc. Postnatal expression in the skin is limited to the dermal papillae. In the kidney, it is expressed from 12.5 dpc in the mesenchyme surrounding the branching ureteric tree, with a strong expression in the more proximal regions of these tubules rather than at the proliferating and branching ends of the ureteric buds. In hair follicle, it is selectively expressed in the vibrissal hair primordia during development. Preferentially expressed in the whisker pad epithelia of 12.5 dpc embryos, in both the epithelial and mesenchymal cells of developing hair follicles. In the early stages of hair follicle development (i.e. stages 0-1), it is expressed in both hair placodes and dermal condensations. In stage 2, it is detected in dermal condensations and adjacent epithelia, but not in the upper region of the hair follicles. Expressed at the tip of developing hair follicles in the later stages (i.e. stages 3-5).

The protein localises to the secreted. The protein resides in the extracellular space. Its subcellular location is the extracellular matrix. It is found in the basement membrane. In terms of biological role, extracellular matrix protein that plays a role in epidermal differentiation and is required for epidermal adhesion during embryonic development. This is FRAS1-related extracellular matrix protein 1 (Frem1) from Mus musculus (Mouse).